We begin with the raw amino-acid sequence, 1488 residues long: Neuropathy target esterase sws (1488 aa).

The Lumenal segment spans residues 1–34 (MDVLELLRASVNGCYNTLFSDAWSQYVSKQIATT). The helical transmembrane segment at 35 to 55 (TYWYGALLAIGALFIAWFLYF) threads the bilayer. Residues 56-1488 (KRLASLRLRD…ENVTEADTKN (1433 aa)) lie on the Cytoplasmic side of the membrane. 175–302 (IFGHFEKPIF…IRVIQVIMIR (128 aa)) lines the a nucleoside 3',5'-cyclic phosphate pocket. 2 disordered regions span residues 339 to 379 (PGPV…DPNP) and 402 to 440 (QQQQ…ATIT). Composition is skewed to low complexity over residues 344 to 356 (SQAS…MASR) and 402 to 413 (QQQQSSGVSVGG). Positions 415–424 (HRSSGACTPT) are enriched in polar residues. Residues 458–587 (ELGL…VVRR) and 576–703 (IVLD…LSHR) each bind a nucleoside 3',5'-cyclic phosphate. Positions 929-1095 (LVLGGGGARG…VNNLPGHLWR (167 aa)) constitute a PNPLA domain. The GXGXXG signature appears at 933–938 (GGGARG). A GXSXG motif is present at residues 960-964 (GVSIG). The active-site Nucleophile is Ser-962. Asp-1082 functions as the Proton acceptor in the catalytic mechanism. The DGA/G motif lies at 1082-1084 (DGG). The residue at position 1176 (Ser-1176) is a Phosphoserine. 2 disordered regions span residues 1348-1376 (RKVD…QGNL) and 1398-1488 (EHKR…DTKN). Positions 1399-1410 (HKRRQKSKHKRD) are enriched in basic residues. Over residues 1440–1452 (IDAKLDQLRKLQQ) the composition is skewed to basic and acidic residues. A compositionally biased stretch (acidic residues) spans 1456–1470 (QGNESEQEQEQEQEQ).

It belongs to the NTE family. As to quaternary structure, interacts with Pka-C3; interaction inhibits the catalytic function of Pka-C3 and the esterase activity of sws.

Its subcellular location is the endoplasmic reticulum membrane. The catalysed reaction is a 1-acyl-sn-glycero-3-phosphocholine + H2O = sn-glycerol 3-phosphocholine + a fatty acid + H(+). Its function is as follows. Phospholipase B that deacylates intracellular phosphatidylcholine (PtdCho), generating glycerophosphocholine (GroPtdCho). This deacylation occurs at both sn-2 and sn-1 positions of PtdCho. Its specific chemical modification by certain organophosphorus (OP) compounds leads to distal axonopathy. Plays a role in the signaling mechanism between neurons and glia that regulates glia wrapping during development of the adult brain. Essential for membrane lipid homeostasis and cell survival in both neurons and glia of the adult brain. The chain is Neuropathy target esterase sws from Drosophila mojavensis (Fruit fly).